A 350-amino-acid polypeptide reads, in one-letter code: Putative transport protein YdbI (350 aa).

The next 8 membrane-spanning stretches (helical) occupy residues 18–38 (IFVV…LILL), 67–87 (VVIT…GFVF), 145–165 (ISTF…FLFE), 207–227 (FIIA…MHFP), 229–249 (LFGL…GVVI), 257–277 (IAYS…IFAI), 289–309 (LMSA…IFSE), and 311–331 (FFGI…LDIL).

The protein belongs to the autoinducer-2 exporter (AI-2E) (TC 2.A.86) family.

It is found in the cell membrane. This Bacillus subtilis (strain 168) protein is Putative transport protein YdbI (ydbI).